The following is a 415-amino-acid chain: Dibenzothiophene monooxygenase (415 aa).

FMN is bound by residues Y94, 127–132, 157–161, R280, 365–366, and T387; these read NASSEN, KHFSS, and IG. The tract at residues 129-140 is lid loop; the sequence is SSENNSHILDWK.

This sequence belongs to the DszC flavin monooxygenase family. In terms of assembly, homotetramer.

Its subcellular location is the cytoplasm. The catalysed reaction is dibenzothiophene + 2 FMNH2 + 2 O2 = dibenzothiophene 5,5-dioxide + 2 FMN + 2 H2O + 2 H(+). It catalyses the reaction dibenzothiophene + FMNH2 + O2 = dibenzothiophene 5-oxide + FMN + H2O + H(+). The enzyme catalyses dibenzothiophene 5-oxide + FMNH2 + O2 = dibenzothiophene 5,5-dioxide + FMN + H2O + H(+). It participates in sulfur metabolism; dibenzothiophene degradation. Its activity is regulated as follows. Inhibited at high concentrations of FMN or FAD. Functionally, catalyzes the first step of the '4S' desulfurization pathway that removes covalently bound sulfur from dibenzothiophene (DBT) without breaking carbon-carbon bonds. Sulfur dioxygenase which converts DBT to DBT-sulfone (DBTO2 or DBT 5,5-dioxide) probably in a stepwise manner. In addition to FMNH2 can also use FAD (although FAD is less efficient). The chain is Dibenzothiophene monooxygenase from Mycolicibacterium goodii (Mycobacterium goodii).